Reading from the N-terminus, the 399-residue chain is Leu/Ile/Val-binding protein homolog 7 (399 aa).

The N-terminal stretch at 1-22 is a signal peptide; the sequence is MEKHLIALSVAALQAGAAPASA.

This sequence belongs to the leucine-binding protein family.

Component of an amino-acid transport system. The sequence is that of Leu/Ile/Val-binding protein homolog 7 from Brucella abortus (strain 2308).